An 84-amino-acid chain; its full sequence is MLSLRPNCECCDRDLPPDSGDAMICTFECTFCAGCAETKLGGTCPNCGGELVRRPVRPASMLKKYPASTARVLKPQGCAPERAA.

A cysteine motif region spans residues 8-47; the sequence is CECCDRDLPPDSGDAMICTFECTFCAGCAETKLGGTCPNC.

This is an uncharacterized protein from Rhizobium meliloti (strain 1021) (Ensifer meliloti).